A 174-amino-acid chain; its full sequence is Streptothricin acetyltransferase (174 aa).

The N-acetyltransferase domain occupies 20–170 (FIVREVFDVH…AMYWYWFSGA (151 aa)).

Belongs to the acetyltransferase family. GNAT subfamily.

The catalysed reaction is streptothricin F + acetyl-CoA = N(beta)-acetylstreptothricin F + CoA + H(+). Involved in resistance to streptothricin, a broad-spectrum antibiotic produced by streptomycetes. Detoxifies streptothricin via acetylation of the beta amino group of the first beta-lysyl moiety of streptothricin. This Escherichia coli protein is Streptothricin acetyltransferase (sat-1).